A 408-amino-acid polypeptide reads, in one-letter code: Lysosome-associated membrane glycoprotein 3 (408 aa).

The N-terminal stretch at 1 to 20 is a signal peptide; that stretch reads MPGQTSAVAVLLCLAVILHG. The Lumenal portion of the chain corresponds to 21-373; it reads YQIREKEFPE…IVDECLSDYT (353 aa). N-linked (GlcNAc...) asparagine glycosylation is found at N55 and N225. A disulfide bridge connects residues C230 and C267. N284 carries N-linked (GlcNAc...) asparagine glycosylation. C331 and C368 are joined by a disulfide. The helical transmembrane segment at 374–394 threads the bilayer; sequence VVLPVVGIIVVVLCVVGLGIY. Residues 395 to 408 are Cytoplasmic-facing; sequence KIRQRRQSSAYQRI.

Belongs to the LAMP family. As to quaternary structure, monomer. Interacts with FURIN.

It is found in the cell surface. It localises to the lysosome membrane. Its subcellular location is the cytoplasmic vesicle membrane. The protein resides in the early endosome membrane. Functionally, lysosomal membrane glycoprotein which plays a role in the unfolded protein response (UPR) that contributes to protein degradation and cell survival during proteasomal dysfunction. Plays a role in the process of fusion of the lysosome with the autophagosome, thereby modulating the autophagic process. Promotes hepatocellular lipogenesis through activation of the PI3K/Akt pathway. May also play a role in dendritic cell function and in adaptive immunity. The chain is Lysosome-associated membrane glycoprotein 3 (Lamp3) from Rattus norvegicus (Rat).